The chain runs to 411 residues: Fructose-1,6-bisphosphatase, chloroplastic (411 aa).

The transit peptide at 1-53 directs the protein to the chloroplast; it reads MAATAGATPSSHLLLSSSRHVAASPQPRILFPSLSGKRVAVGKNHHATGVRCM. Residues E133, E162, D183, L185, and D186 each coordinate Mg(2+). A substrate-binding site is contributed by 186–189; it reads DGSS. C227 and C232 form a disulfide bridge. Residues N291, Y323, Y341, Y343, and K353 each contribute to the substrate site. E359 provides a ligand contact to Mg(2+).

It belongs to the FBPase class 1 family. In terms of assembly, homotetramer. Mg(2+) serves as cofactor.

The protein resides in the plastid. Its subcellular location is the chloroplast stroma. It carries out the reaction beta-D-fructose 1,6-bisphosphate + H2O = beta-D-fructose 6-phosphate + phosphate. It participates in carbohydrate biosynthesis; Calvin cycle. The polypeptide is Fructose-1,6-bisphosphatase, chloroplastic (FBP) (Brassica napus (Rape)).